Reading from the N-terminus, the 237-residue chain is Insulin-like growth factor-binding protein 6 (237 aa).

A signal peptide spans 1–25; that stretch reads MTPHRLLPPLLLTLLLAARPGGALA. Residues 26 to 105 enclose the IGFBP N-terminal domain; that stretch reads RCPGCGQGVS…LQGRGRCGRA (80 aa). 5 disulfide bridges follow: cysteine 27-cysteine 30, cysteine 38-cysteine 42, cysteine 55-cysteine 61, cysteine 69-cysteine 82, and cysteine 76-cysteine 102. Residues 101–158 form a disordered region; it reads RCGRARTPSGENPKESKPQAGTARSQDVNRRDQQRNSGTSTTPSRSNSGGVQDTEMGP. Residues 135–151 are compositionally biased toward polar residues; the sequence is RNSGTSTTPSRSNSGGV. Positions 156 to 231 constitute a Thyroglobulin type-1 domain; sequence MGPCRKHLDS…SEGGDGSSLC (76 aa). 3 cysteine pairs are disulfide-bonded: cysteine 159–cysteine 186, cysteine 197–cysteine 208, and cysteine 210–cysteine 231. The interval 215-237 is disordered; that stretch reads GQPLPGSSEGGDGSSLCPTGSSG.

Interacts (via C-terminal domain) with PHB2. Post-translationally, O-glycosylated.

The protein localises to the secreted. In terms of biological role, IGF-binding proteins prolong the half-life of the IGFs and have been shown to either inhibit or stimulate the growth promoting effects of the IGFs on cell culture. They alter the interaction of IGFs with their cell surface receptors. Activates the MAPK signaling pathway and induces cell migration. The polypeptide is Insulin-like growth factor-binding protein 6 (IGFBP6) (Bos taurus (Bovine)).